Reading from the N-terminus, the 364-residue chain is Probable dual-specificity RNA methyltransferase RlmN (364 aa).

The active-site Proton acceptor is the glutamate 107. A Radical SAM core domain is found at 113–346 (HDYGNSVCVT…ATIRREQGSD (234 aa)). A disulfide bridge connects residues cysteine 120 and cysteine 351. [4Fe-4S] cluster-binding residues include cysteine 127, cysteine 131, and cysteine 134. Residues 177–178 (GE), serine 209, 232–234 (SLH), and asparagine 308 each bind S-adenosyl-L-methionine. Residue cysteine 351 is the S-methylcysteine intermediate of the active site.

This sequence belongs to the radical SAM superfamily. RlmN family. The cofactor is [4Fe-4S] cluster.

It localises to the cytoplasm. It carries out the reaction adenosine(2503) in 23S rRNA + 2 reduced [2Fe-2S]-[ferredoxin] + 2 S-adenosyl-L-methionine = 2-methyladenosine(2503) in 23S rRNA + 5'-deoxyadenosine + L-methionine + 2 oxidized [2Fe-2S]-[ferredoxin] + S-adenosyl-L-homocysteine. The enzyme catalyses adenosine(37) in tRNA + 2 reduced [2Fe-2S]-[ferredoxin] + 2 S-adenosyl-L-methionine = 2-methyladenosine(37) in tRNA + 5'-deoxyadenosine + L-methionine + 2 oxidized [2Fe-2S]-[ferredoxin] + S-adenosyl-L-homocysteine. Functionally, specifically methylates position 2 of adenine 2503 in 23S rRNA and position 2 of adenine 37 in tRNAs. Confers resistance to some classes of antibiotics. This chain is Probable dual-specificity RNA methyltransferase RlmN, found in Staphylococcus aureus (strain MW2).